A 192-amino-acid polypeptide reads, in one-letter code: Small ribosomal subunit protein eS7 (192 aa).

The protein belongs to the eukaryotic ribosomal protein eS7 family.

This is Small ribosomal subunit protein eS7 (RPS7) from Secale cereale (Rye).